Here is a 430-residue protein sequence, read N- to C-terminus: Aspartate aminotransferase, mitochondrial (430 aa).

The N-terminal 29 residues, 1–29 (MALLHSGRVLPGIAAAFHPGLAAAASARA), are a transit peptide targeting the mitochondrion. Thr48 is modified (phosphothreonine). N6-acetyllysine is present on Lys59. Gly65 serves as a coordination point for substrate. An N6-acetyllysine; alternate modification is found at Lys73. Residue Lys73 is modified to N6-succinyllysine; alternate. Lys82 is subject to N6-acetyllysine. The residue at position 90 (Lys90) is an N6-acetyllysine; alternate. Lys90 is subject to N6-succinyllysine; alternate. 3'-nitrotyrosine; alternate is present on Tyr96. Tyr96 carries the phosphotyrosine; alternate modification. 2 positions are modified to N6-acetyllysine; alternate: Lys107 and Lys122. 2 positions are modified to N6-succinyllysine; alternate: Lys107 and Lys122. A Phosphoserine modification is found at Ser143. The residue at position 159 (Lys159) is an N6-acetyllysine; alternate. At Lys159 the chain carries N6-succinyllysine; alternate. Substrate is bound at residue Trp162. Lys185 is modified (N6-acetyllysine; alternate). Position 185 is an N6-succinyllysine; alternate (Lys185). Position 215 (Asn215) interacts with substrate. N6-succinyllysine is present on Lys227. Lys234 carries the post-translational modification N6-acetyllysine. Residues Lys279 and Lys296 each carry the N6-acetyllysine; alternate modification. Position 279 is an N6-(pyridoxal phosphate)lysine; alternate (Lys279). Lys296 bears the N6-succinyllysine; alternate mark. Position 302 is an N6-acetyllysine (Lys302). Lys309 carries the N6-acetyllysine; alternate modification. An N6-succinyllysine; alternate modification is found at Lys309. Arg313 is subject to Asymmetric dimethylarginine. A Phosphothreonine modification is found at Thr333. At Lys338 the chain carries N6-acetyllysine; alternate. The residue at position 338 (Lys338) is an N6-succinyllysine; alternate. Lys345 is subject to N6-acetyllysine. Lys363 is subject to N6-acetyllysine; alternate. An N6-succinyllysine; alternate modification is found at Lys363. N6-acetyllysine is present on residues Lys364 and Lys387. An N6-acetyllysine; alternate mark is found at Lys396 and Lys404. N6-succinyllysine; alternate occurs at positions 396 and 404. Arg407 contacts substrate.

The protein belongs to the class-I pyridoxal-phosphate-dependent aminotransferase family. In terms of assembly, homodimer. The cofactor is pyridoxal 5'-phosphate.

Its subcellular location is the mitochondrion matrix. It is found in the cell membrane. The catalysed reaction is L-aspartate + 2-oxoglutarate = oxaloacetate + L-glutamate. It carries out the reaction L-kynurenine + 2-oxoglutarate = kynurenate + L-glutamate + H2O. In terms of biological role, catalyzes the irreversible transamination of the L-tryptophan metabolite L-kynurenine to form kynurenic acid (KA). As a member of the malate-aspartate shuttle, it has a key role in the intracellular NAD(H) redox balance. Is important for metabolite exchange between mitochondria and cytosol, and for amino acid metabolism. Facilitates cellular uptake of long-chain free fatty acids. The polypeptide is Aspartate aminotransferase, mitochondrial (Homo sapiens (Human)).